The primary structure comprises 232 residues: Small ribosomal subunit protein uS3 (232 aa).

The KH type-2 domain maps to 39 to 107; that stretch reads IREILHKELK…DVVINIVEIR (69 aa).

It belongs to the universal ribosomal protein uS3 family. In terms of assembly, part of the 30S ribosomal subunit. Forms a tight complex with proteins S10 and S14.

In terms of biological role, binds the lower part of the 30S subunit head. Binds mRNA in the 70S ribosome, positioning it for translation. This Rhodopseudomonas palustris (strain BisB18) protein is Small ribosomal subunit protein uS3.